The following is a 397-amino-acid chain: uncharacterized protein (397 aa).

The next 12 membrane-spanning stretches (helical) occupy residues 5 to 25 (LKILVIGMFINVTGASFLWPL), 43 to 63 (LVLMLNSGASVAGNLCGGFLF), 69 to 89 (FKSIMLGIAITLASLMGLVFF), 92 to 112 (WPAYIVLLTIVGFGSGVVFPA), 131 to 151 (AIYVAQNAGVAVGSALGGVVA), 157 to 177 (YVFLANAVLYLIFFFIVYFGF), 202 to 222 (FAALIILSGGYVLGWLAYSQW), 233 to 253 (IGISLSLYSVLWTVNGILIVL), 269 to 289 (LKAQMVIGFIIFIVSFSMLLT), 293 to 313 (FPMFLAAMVILTIGEMLVWPA), 333 to 353 (FVNSAATGGRMIGPLFGGVLV), and 360 to 380 (ALVLSLLVLLLISIATTLLYD).

The protein belongs to the major facilitator superfamily.

It is found in the cell membrane. This is an uncharacterized protein from Bacillus subtilis (strain 168).